Reading from the N-terminus, the 477-residue chain is Argininosuccinate lyase (477 aa).

The span at 1–18 shows a compositional bias: polar residues; the sequence is MTTSSHSSEQPTSTQTSG. The segment at 1–21 is disordered; sequence MTTSSHSSEQPTSTQTSGMWG.

It belongs to the lyase 1 family. Argininosuccinate lyase subfamily.

It is found in the cytoplasm. It catalyses the reaction 2-(N(omega)-L-arginino)succinate = fumarate + L-arginine. The protein operates within amino-acid biosynthesis; L-arginine biosynthesis; L-arginine from L-ornithine and carbamoyl phosphate: step 3/3. This chain is Argininosuccinate lyase, found in Acinetobacter baylyi (strain ATCC 33305 / BD413 / ADP1).